The sequence spans 349 residues: tRNA pseudouridine synthase D (349 aa).

Phe-27 serves as a coordination point for substrate. Catalysis depends on Asp-80, which acts as the Nucleophile. Asn-129 serves as a coordination point for substrate. In terms of domain architecture, TRUD spans 155–303 (GVPNYFGAQR…VEASRRAMLL (149 aa)). Residue Phe-329 participates in substrate binding.

Belongs to the pseudouridine synthase TruD family.

The catalysed reaction is uridine(13) in tRNA = pseudouridine(13) in tRNA. In terms of biological role, responsible for synthesis of pseudouridine from uracil-13 in transfer RNAs. This is tRNA pseudouridine synthase D from Salmonella typhi.